The chain runs to 244 residues: Biosynthetic peptidoglycan transglycosylase (244 aa).

Residues 23–43 (LVVIGAWLAGILLFSFLPVPF) traverse the membrane as a helical segment.

This sequence belongs to the glycosyltransferase 51 family.

It localises to the cell inner membrane. The catalysed reaction is [GlcNAc-(1-&gt;4)-Mur2Ac(oyl-L-Ala-gamma-D-Glu-L-Lys-D-Ala-D-Ala)](n)-di-trans,octa-cis-undecaprenyl diphosphate + beta-D-GlcNAc-(1-&gt;4)-Mur2Ac(oyl-L-Ala-gamma-D-Glu-L-Lys-D-Ala-D-Ala)-di-trans,octa-cis-undecaprenyl diphosphate = [GlcNAc-(1-&gt;4)-Mur2Ac(oyl-L-Ala-gamma-D-Glu-L-Lys-D-Ala-D-Ala)](n+1)-di-trans,octa-cis-undecaprenyl diphosphate + di-trans,octa-cis-undecaprenyl diphosphate + H(+). It functions in the pathway cell wall biogenesis; peptidoglycan biosynthesis. Functionally, peptidoglycan polymerase that catalyzes glycan chain elongation from lipid-linked precursors. This is Biosynthetic peptidoglycan transglycosylase from Pectobacterium carotovorum subsp. carotovorum (strain PC1).